The chain runs to 294 residues: UDP-3-O-acyl-N-acetylglucosamine deacetylase (294 aa).

Positions 75, 232, and 236 each coordinate Zn(2+). H259 functions as the Proton donor in the catalytic mechanism.

Belongs to the LpxC family. Requires Zn(2+) as cofactor.

The catalysed reaction is a UDP-3-O-[(3R)-3-hydroxyacyl]-N-acetyl-alpha-D-glucosamine + H2O = a UDP-3-O-[(3R)-3-hydroxyacyl]-alpha-D-glucosamine + acetate. It participates in glycolipid biosynthesis; lipid IV(A) biosynthesis; lipid IV(A) from (3R)-3-hydroxytetradecanoyl-[acyl-carrier-protein] and UDP-N-acetyl-alpha-D-glucosamine: step 2/6. Catalyzes the hydrolysis of UDP-3-O-myristoyl-N-acetylglucosamine to form UDP-3-O-myristoylglucosamine and acetate, the committed step in lipid A biosynthesis. This chain is UDP-3-O-acyl-N-acetylglucosamine deacetylase, found in Campylobacter curvus (strain 525.92).